We begin with the raw amino-acid sequence, 312 residues long: DNA-directed RNA polymerase subunit alpha (312 aa).

The alpha N-terminal domain (alpha-NTD) stretch occupies residues 1–229 (MLQYQIDRID…ELFQPLATVS (229 aa)). An alpha C-terminal domain (alpha-CTD) region spans residues 239–312 (EPAAEAQIPL…ISIPQSRTSA (74 aa)).

It belongs to the RNA polymerase alpha chain family. As to quaternary structure, in cyanobacteria the RNAP catalytic core is composed of 2 alpha, 1 beta, 1 beta', 1 gamma and 1 omega subunit. When a sigma factor is associated with the core the holoenzyme is formed, which can initiate transcription.

The enzyme catalyses RNA(n) + a ribonucleoside 5'-triphosphate = RNA(n+1) + diphosphate. Functionally, DNA-dependent RNA polymerase catalyzes the transcription of DNA into RNA using the four ribonucleoside triphosphates as substrates. This is DNA-directed RNA polymerase subunit alpha from Prochlorococcus marinus (strain NATL1A).